A 263-amino-acid chain; its full sequence is Endonuclease NucS (263 aa).

Belongs to the NucS endonuclease family.

Its subcellular location is the cytoplasm. Cleaves both 3' and 5' ssDNA extremities of branched DNA structures. This is Endonuclease NucS from Methanocaldococcus jannaschii (strain ATCC 43067 / DSM 2661 / JAL-1 / JCM 10045 / NBRC 100440) (Methanococcus jannaschii).